Reading from the N-terminus, the 289-residue chain is Polyisoprenoid diphosphate/phosphate phosphohydrolase PLPP6 (289 aa).

The segment at 1-81 (MQSPRRNAEG…SSQALPPQLP (81 aa)) is disordered. At 1–126 (MQSPRRNAEG…ESSSWGSMRP (126 aa)) the chain is on the cytoplasmic side. Ser23, Ser30, and Ser64 each carry phosphoserine. Residues 127–147 (LMKLLEISGHGIPWLLGTLYC) form a helical membrane-spanning segment. The Lumenal segment spans residues 148–158 (LSRSDSWAGRE). Residues 159-179 (VLMNLLFALLLDLLLVSLIKG) traverse the membrane as a helical segment. Residues 178-186 (KGLVRRRRP) are phosphatase sequence motif I. The Cytoplasmic portion of the chain corresponds to 180–222 (LVRRRRPAHNQMDMFFTISVDKYSFPSGHTTRAALVSRFILNH). A phosphatase sequence motif II region spans residues 205-208 (PSGH). The active-site Proton donors is His208. A helical membrane pass occupies residues 223-243 (LVLAIPLRVLVVLWAFILGLS). Positions 243–254 (SRVMLGRHNVTD) are phosphatase sequence motif III. At 244–254 (RVMLGRHNVTD) the chain is on the lumenal side. The Nucleophile role is filled by His250. Residues 255-275 (VAFGFFLGYMQYSIVDYCWLS) form a helical membrane-spanning segment. The Cytoplasmic segment spans residues 276–289 (PRTAPVLFVLWNQP).

It belongs to the PA-phosphatase related phosphoesterase family. Post-translationally, phosphorylation by PKC activates the phosphatase activity towards presqualene diphosphate.

Its subcellular location is the endoplasmic reticulum membrane. The protein localises to the nucleus envelope. It localises to the nucleus inner membrane. It catalyses the reaction presqualene diphosphate + H2O = presqualene phosphate + phosphate + H(+). It carries out the reaction presqualene phosphate + H2O = presqualene alcohol + phosphate. The enzyme catalyses (2E,6E)-farnesyl diphosphate + H2O = (2E,6E)-farnesyl phosphate + phosphate + H(+). The catalysed reaction is (2E,6E)-farnesyl phosphate + H2O = (2E,6E)-farnesol + phosphate. It catalyses the reaction (2E,6E,10E)-geranylgeranyl diphosphate + H2O = (2E,6E,10E)-geranylgeranyl phosphate + phosphate + H(+). It carries out the reaction (2E,6E,10E)-geranylgeranyl phosphate + H2O = (2E,6E,10E)-geranylgeraniol + phosphate. The enzyme catalyses (2E)-geranyl diphosphate + H2O = (2E)-geranyl phosphate + phosphate + H(+). The catalysed reaction is (2E)-geranyl phosphate + H2O = (2E)-geraniol + phosphate. It catalyses the reaction 1,2-dihexadecanoyl-sn-glycero-3-phosphate + H2O = 1,2-dihexadecanoyl-sn-glycerol + phosphate. Its function is as follows. Magnesium-independent polyisoprenoid diphosphatase that catalyzes the sequential dephosphorylation of presqualene, farnesyl, geranyl and geranylgeranyl diphosphates. Functions in the innate immune response through the dephosphorylation of presqualene diphosphate which acts as a potent inhibitor of the signaling pathways contributing to polymorphonuclear neutrophils activation. May regulate the biosynthesis of cholesterol and related sterols by dephosphorylating presqualene and farnesyl diphosphate, two key intermediates in this biosynthetic pathway. May also play a role in protein prenylation by acting on farnesyl diphosphate and its derivative geranylgeranyl diphosphate, two precursors for the addition of isoprenoid anchors to membrane proteins. Has a lower activity towards phosphatidic acid (PA), but through phosphatidic acid dephosphorylation may participate in the biosynthesis of phospholipids and triacylglycerols. May also act on ceramide-1-P, lysophosphatidic acid (LPA) and sphing-4-enine 1-phosphate/sphingosine-1-phosphate. The polypeptide is Polyisoprenoid diphosphate/phosphate phosphohydrolase PLPP6 (Bos taurus (Bovine)).